We begin with the raw amino-acid sequence, 591 residues long: L-fucose isomerase (591 aa).

Catalysis depends on proton acceptor residues glutamate 337 and aspartate 361. The Mn(2+) site is built by glutamate 337, aspartate 361, and histidine 528.

The protein belongs to the L-fucose isomerase family. As to quaternary structure, homohexamer. Mn(2+) is required as a cofactor.

Its subcellular location is the cytoplasm. It catalyses the reaction L-fucose = L-fuculose. Its pathway is carbohydrate degradation; L-fucose degradation; L-lactaldehyde and glycerone phosphate from L-fucose: step 1/3. Its function is as follows. Converts the aldose L-fucose into the corresponding ketose L-fuculose. In Escherichia coli O157:H7 (strain EC4115 / EHEC), this protein is L-fucose isomerase.